We begin with the raw amino-acid sequence, 358 residues long: WD repeat-containing protein 53 (358 aa).

WD repeat units lie at residues 8–46 (GHSSPILCLNASQEGLVASGAEGGDLVVWGEDGTLLGHT), 92–131 (VNEEEINCLSLNETENLLASADDSGTIKILDLENKKISRS), 134–174 (RHSN…PLWI), 195–234 (LNPALAHSVSVASCGNVFSCGAEDGKVRIFRVMGVKCEQE), and 239–278 (GHSLGVSQVCFLRESYLLLTGGNDGKIKLWDVSSEIEKKH). A compositionally biased stretch (basic residues) spans 278–294 (HKSPTKHTHRKKTKRAA). Residues 278 to 309 (HKSPTKHTHRKKTKRAAYTKQGGGTHASVTGE) are disordered.

It belongs to the WD repeat WDR53 family.

In Bos taurus (Bovine), this protein is WD repeat-containing protein 53 (WDR53).